The sequence spans 153 residues: Prostaglandin E synthase (153 aa).

Topologically, residues 1–13 are lumenal; that stretch reads MTSLGLVMENSQV. The helical transmembrane segment at 14–42 threads the bilayer; the sequence is LPAFLLCSTLLVIKMYAVAVITGQVRLRK. Arg39 is a glutathione binding site. The Cytoplasmic segment spans residues 43–61; that stretch reads KAFANPEDALKRGGLQYCR. The helical transmembrane segment at 62 to 91 threads the bilayer; the sequence is SDPDVERCLRAHRNDMETIYPFLFLGFVYS. Residue 74–78 participates in glutathione binding; that stretch reads RNDME. Residues 92–98 are Lumenal-facing; it reads FLGPNPL. The helical transmembrane segment at 99–120 threads the bilayer; that stretch reads IAWIHFLVVLTGRVVHTVAYLG. Glutathione contacts are provided by His114 and Tyr118. At 121-124 the chain is on the cytoplasmic side; the sequence is KMNP. The chain crosses the membrane as a helical span at residues 125–153; sequence RIRSGAYVLAQFACFSMALQILWEVAHHL. 127-131 is a glutathione binding site; it reads RSGAY.

It belongs to the MAPEG family. Glutathione serves as cofactor.

The protein localises to the membrane. The protein resides in the cytoplasm. It is found in the perinuclear region. The enzyme catalyses prostaglandin H2 = prostaglandin E2. The catalysed reaction is 2-glyceryl-prostaglandin H2 = 2-glyceryl-prostaglandin E2. It carries out the reaction prostaglandin G2 = (15S)-15-hydroperoxy-prostaglandin E2. It catalyses the reaction 1-chloro-2,4-dinitrobenzene + glutathione = 2,4-dinitrophenyl-S-glutathione + chloride + H(+). The enzyme catalyses (5S)-hydroperoxy-(6E,8Z,11Z,14Z)-eicosatetraenoate + 2 glutathione = (5S)-hydroxy-(6E,8Z,11Z,14Z)-eicosatetraenoate + glutathione disulfide + H2O. The protein operates within lipid metabolism; prostaglandin biosynthesis. Activity is increased following LPS stimulation and down-regulated by the anti-inflammatory glucocorticoid dexamethasone. Terminal enzyme of the cyclooxygenase (COX)-2-mediated prostaglandin E2 (PGE2) biosynthetic pathway. Catalyzes the glutathione-dependent oxidoreduction of prostaglandin endoperoxide H2 (PGH2) to prostaglandin E2 (PGE2) in response to inflammatory stimuli. Plays a key role in inflammation response, fever and pain. Also catalyzes the oxidoreduction of endocannabinoids into prostaglandin glycerol esters and PGG2 into 15-hydroperoxy-PGE2. In addition, displays low glutathione transferase and glutathione-dependent peroxidase activities, toward 1-chloro-2,4-dinitrobenzene and 5-hydroperoxyicosatetraenoic acid (5-HPETE), respectively. This Rattus norvegicus (Rat) protein is Prostaglandin E synthase (Ptges).